The primary structure comprises 731 residues: Alpha-xylosidase (731 aa).

Catalysis depends on residues D353 and E356. D428 functions as the Proton donor in the catalytic mechanism.

Belongs to the glycosyl hydrolase 31 family. As to quaternary structure, monomer.

The catalysed reaction is Hydrolysis of terminal, non-reducing alpha-D-xylose residues with release of alpha-D-xylose.. In terms of biological role, catalyzes the liberation of alpha-xylose from the non-reducing terminal glucose of xyloglucan oligosaccharides. Has high hydrolytic activity on the disaccharide isoprimeverose. Follows a retaining mechanism of substrate hydrolysis. This is Alpha-xylosidase (xylS) from Saccharolobus solfataricus (strain ATCC 35092 / DSM 1617 / JCM 11322 / P2) (Sulfolobus solfataricus).